Here is an 81-residue protein sequence, read N- to C-terminus: Photosystem I iron-sulfur center (81 aa).

2 4Fe-4S ferredoxin-type domains span residues 2–31 (SHSV…MIPW) and 39–68 (IASA…VRVY). 8 residues coordinate [4Fe-4S] cluster: Cys-11, Cys-14, Cys-17, Cys-21, Cys-48, Cys-51, Cys-54, and Cys-58.

As to quaternary structure, the eukaryotic PSI reaction center is composed of at least 11 subunits. Requires [4Fe-4S] cluster as cofactor.

The protein resides in the plastid thylakoid membrane. The enzyme catalyses reduced [plastocyanin] + hnu + oxidized [2Fe-2S]-[ferredoxin] = oxidized [plastocyanin] + reduced [2Fe-2S]-[ferredoxin]. Apoprotein for the two 4Fe-4S centers FA and FB of photosystem I (PSI); essential for photochemical activity. FB is the terminal electron acceptor of PSI, donating electrons to ferredoxin. The C-terminus interacts with PsaA/B/D and helps assemble the protein into the PSI complex. Required for binding of PsaD and PsaE to PSI. PSI is a plastocyanin-ferredoxin oxidoreductase, converting photonic excitation into a charge separation, which transfers an electron from the donor P700 chlorophyll pair to the spectroscopically characterized acceptors A0, A1, FX, FA and FB in turn. This chain is Photosystem I iron-sulfur center, found in Cuscuta gronovii (Common dodder).